A 690-amino-acid polypeptide reads, in one-letter code: Protein AC23 (690 aa).

A signal peptide spans 1-37 (MLACKFSQYQAFIMDGVKLLGTCALIILLSTTSTVVG).

It is found in the virion. In terms of biological role, pathogenicity factor that accelerates mortality in the host insect. This chain is Protein AC23, found in Autographa californica nuclear polyhedrosis virus (AcMNPV).